The chain runs to 245 residues: Probable phosphatase ECA2529 (245 aa).

Zn(2+) is bound by residues histidine 7, histidine 9, histidine 15, histidine 40, glutamate 73, histidine 101, histidine 131, aspartate 192, and histidine 194.

This sequence belongs to the PHP family. In terms of assembly, homotrimer. Zn(2+) is required as a cofactor.

The polypeptide is Probable phosphatase ECA2529 (Pectobacterium atrosepticum (strain SCRI 1043 / ATCC BAA-672) (Erwinia carotovora subsp. atroseptica)).